A 216-amino-acid polypeptide reads, in one-letter code: Probable GTP-binding protein EngB (216 aa).

Positions 43–216 (DRLEVCFAGR…TLRSIITDLT (174 aa)) constitute an EngB-type G domain. GTP-binding positions include 51–58 (GRSNVGKS), 78–82 (GRTQE), 96–99 (DLPG), 163–166 (TKAD), and 197–199 (TSS). The Mg(2+) site is built by Ser-58 and Thr-80.

It belongs to the TRAFAC class TrmE-Era-EngA-EngB-Septin-like GTPase superfamily. EngB GTPase family. Mg(2+) is required as a cofactor.

Necessary for normal cell division and for the maintenance of normal septation. In Roseobacter denitrificans (strain ATCC 33942 / OCh 114) (Erythrobacter sp. (strain OCh 114)), this protein is Probable GTP-binding protein EngB.